A 460-amino-acid chain; its full sequence is Ammonium transporter 1 member 3 (460 aa).

The next 10 membrane-spanning stretches (helical) occupy residues 15–37, 50–72, 98–117, 124–146, 166–188, 209–227, 255–277, 305–327, 337–356, and 377–399; these read AIYLLFSAYLVFVMQLGFAMLCA, LTNVVDAVVGSLSYYLFGFAFAF, FFLYQWAFAIAVAGITSGSI, TAYLVFSFFLTGFVYPVVAHWLW, IDFAGSGVVHLVGGIAGFWGSIV, NATLVVLGTLLLWFGWFGF, AVTTTLAGSTAGIVTLFGRRLLV, PWAAILCGFCAAWVLIGLNILAL, AAQLHGGCGAWGLIFTGLFA, and GLILGGGWGLFGAQIVELLSIVV.

It belongs to the ammonia transporter channel (TC 1.A.11.2) family. As to expression, leaves.

It localises to the membrane. Functionally, ammonium transporter that may be involved in ammonium transport throughout the plant. The chain is Ammonium transporter 1 member 3 (AMT1-3) from Solanum lycopersicum (Tomato).